Reading from the N-terminus, the 165-residue chain is Serine/threonine-protein phosphatase 2A 56 kDa regulatory subunit epsilon isoform (165 aa).

Residues 1–41 (MSSAPTTPPSVDKVDGFSRKSVRKARQKRSQSSSQFRSQGK) are disordered. Ser2 carries the post-translational modification N-acetylserine. Thr7 carries the phosphothreonine modification. The segment covering 20 to 29 (KSVRKARQKR) has biased composition (basic residues). Phosphoserine occurs at positions 30, 32, and 34. Over residues 30–41 (SQSSSQFRSQGK) the composition is skewed to low complexity.

The protein belongs to the phosphatase 2A regulatory subunit B56 family. In terms of assembly, PP2A consists of a common heterodimeric core enzyme, composed of a 36 kDa catalytic subunit (subunit C) and a 65 kDa constant regulatory subunit (PR65 or subunit A), that associates with a variety of regulatory subunits. Proteins that associate with the core dimer include three families of regulatory subunits B (the R2/B/PR55/B55, R3/B''/PR72/PR130/PR59 and R5/B'/B56 families), the 48 kDa variable regulatory subunit, viral proteins, and cell signaling molecules. Interacts with SGO1. Found in a complex with at least ARL2, PPP2CB; PPP2R1A, PPP2R2A, PPP2R5E and TBCD. In terms of tissue distribution, highly expressed in testis, lung and brain.

The protein resides in the cytoplasm. Its function is as follows. The B regulatory subunit might modulate substrate selectivity and catalytic activity, and might also direct the localization of the catalytic enzyme to a particular subcellular compartment. This is Serine/threonine-protein phosphatase 2A 56 kDa regulatory subunit epsilon isoform (PPP2R5E) from Oryctolagus cuniculus (Rabbit).